A 90-amino-acid chain; its full sequence is DNA-binding protein HU (90 aa).

This sequence belongs to the bacterial histone-like protein family. Homodimer.

Functionally, histone-like DNA-binding protein which is capable of wrapping DNA to stabilize it, and thus to prevent its denaturation under extreme environmental conditions. This chain is DNA-binding protein HU (hup), found in Staphylococcus aureus (strain COL).